An 861-amino-acid polypeptide reads, in one-letter code: Replication factor C subunit 1 (861 aa).

The segment at 1–103 (MVNISDFFGK…SSKSSDSASN (103 aa)) is disordered. A compositionally biased stretch (polar residues) spans 16–28 (RSSTSRPTRQVGS). A Phosphothreonine modification is found at Thr38. A Phosphoserine modification is found at Ser40. Thr63 bears the Phosphothreonine mark. A BRCT domain is found at 153–243 (GKPNCLLGLT…PAEGGDGEAA (91 aa)). ATP-binding positions include Thr299, Cys311, 353–361 (GPPGIGKTT), and Asn456. The interval 788–861 (STIGGGGVGT…GGSKKRKTKA (74 aa)) is disordered. Residues 803 to 823 (DFEDVVDADDNPVPADDEETQ) are compositionally biased toward acidic residues. 2 consecutive short sequence motifs (nuclear localization signal) follow at residues 830-834 (KKDKL) and 855-860 (KKRKTK). The segment covering 836 to 861 (KQKAKPTKRKTATSKPGGSKKRKTKA) has biased composition (basic residues).

Belongs to the activator 1 large subunit family. As to quaternary structure, replication factor C (RFC) is a heteropentamer of subunits RFC1, RFC2, RFC3, RFC4 and RFC5 and forms a complex with POL30/PCNA in the presence of ATP. Interacts with ECO1 and POL30/PCNA.

The protein resides in the nucleus. Component of the ATP-dependent clamp loader RFC complex for the POL30/PCNA homotrimer DNA clamp. During a clamp loading circle, the RFC:clamp complex binds to DNA and the recognition of the double-stranded/single-stranded junction stimulates ATP hydrolysis by RFC. The complex presumably provides bipartite ATP sites in which one subunit supplies a catalytic site for hydrolysis of ATP bound to the neighboring subunit. Dissociation of RFC from the clamp leaves the clamp encircling DNA. Replication factor C (RFC or activator 1) complex acts during elongation of primed DNA templates by DNA polymerase delta and epsilon. RFC has an essential but redundant activity in sister chromatid cohesion establishment. The polypeptide is Replication factor C subunit 1 (RFC1) (Saccharomyces cerevisiae (strain ATCC 204508 / S288c) (Baker's yeast)).